The primary structure comprises 281 residues: Bifunctional N-acyl-homoserine lactone acylase/prephenate dehydratase (281 aa).

The region spanning 6–181 (IIAFQGRPGA…NTTRFYIASR (176 aa)) is the Prephenate dehydratase domain. The 78-residue stretch at 196–273 (TLLFRVNNQP…EQQEILGVYP (78 aa)) folds into the ACT domain. Residues A207, L208, N221, and M222 each coordinate L-phenylalanine.

As to quaternary structure, homodimer.

It carries out the reaction an N-acyl-L-homoserine lactone + H2O = L-homoserine lactone + a carboxylate. The enzyme catalyses prephenate + H(+) = 3-phenylpyruvate + CO2 + H2O. Its pathway is amino-acid biosynthesis; L-phenylalanine biosynthesis; phenylpyruvate from prephenate: step 1/1. Its function is as follows. Multifunctional enzyme that acts on N-acyl-homoserine lactones (AHLs), beta-lactam antibiotics and shows prephenate dehydratase activity. Acts as an acylase on AHL and hydrolyzes the amide bond of the acyl side-chain of AHL molecules, releasing homoserine lactone (HSL) and the fatty acid. Can use different 3-oxo-acyl homoserine lactones, such as 3-oxo-decanoyl homoserine lactone, which is the preferred substrate, 3-oxo-octanoyl homoserine lactone, 3-oxo-hexanoyl homoserine lactone and 3-oxo-dodecanoyl homoserine lactone. It can also degrade various beta-lactam antibiotics, including penicillin G, amoxicillin and ampicillin, but not cefotaxime. In addition, it can complement a phenylalanine auxotrophic E.coli mutant, which carries a kanamycin gene inserted into pheA, suggesting that GqqA can also function as a prephenate dehydratase. Involved in bacterial quorum quenching (QQ) and cellulose biofilm formation. In Komagataeibacter europaeus (Gluconacetobacter europaeus), this protein is Bifunctional N-acyl-homoserine lactone acylase/prephenate dehydratase.